The chain runs to 533 residues: Retinoid isomerohydrolase (533 aa).

Ser-2 is modified (N-acetylserine). Phosphothreonine occurs at positions 101 and 105. Cys-112 carries the S-palmitoyl cysteine; in membrane form lipid modification. At Lys-113 the chain carries N6-acetyllysine. Residue Ser-117 is modified to Phosphoserine. Fe cation is bound at residue His-180. The S-palmitoyl cysteine; in membrane form moiety is linked to residue Cys-231. Fe cation contacts are provided by His-241 and His-313. S-palmitoyl cysteine; in membrane form attachment occurs at residues Cys-329 and Cys-330. His-527 lines the Fe cation pocket.

This sequence belongs to the carotenoid oxygenase family. Interacts with MYO7A; this mediates light-dependent intracellular transport of RPE65. Requires Fe(2+) as cofactor. In terms of processing, palmitoylation by LRAT regulates ligand binding specificity; the palmitoylated form (membrane form) specifically binds all-trans-retinyl-palmitate, while the soluble unpalmitoylated form binds all-trans-retinol (vitamin A). As to expression, retinal pigment epithelium specific.

The protein localises to the cytoplasm. It localises to the cell membrane. Its subcellular location is the microsome membrane. The enzyme catalyses an all-trans-retinyl ester + H2O = 11-cis-retinol + a fatty acid + H(+). It catalyses the reaction lutein = (3R,3'S)-zeaxanthin. The catalysed reaction is all-trans-retinyl hexadecanoate + H2O = 11-cis-retinol + hexadecanoate + H(+). Its function is as follows. Critical isomerohydrolase in the retinoid cycle involved in regeneration of 11-cis-retinal, the chromophore of rod and cone opsins. Catalyzes the cleavage and isomerization of all-trans-retinyl fatty acid esters to 11-cis-retinol which is further oxidized by 11-cis retinol dehydrogenase to 11-cis-retinal for use as visual chromophore. Essential for the production of 11-cis retinal for both rod and cone photoreceptors. Also capable of catalyzing the isomerization of lutein to meso-zeaxanthin an eye-specific carotenoid. The soluble form binds vitamin A (all-trans-retinol), making it available for LRAT processing to all-trans-retinyl ester. The membrane form, palmitoylated by LRAT, binds all-trans-retinyl esters, making them available for IMH (isomerohydrolase) processing to all-cis-retinol. The soluble form is regenerated by transferring its palmitoyl groups onto 11-cis-retinol, a reaction catalyzed by LRAT. The polypeptide is Retinoid isomerohydrolase (Rpe65) (Mus musculus (Mouse)).